The following is a 294-amino-acid chain: Nucleotide-binding protein Cbei_4857 (294 aa).

ATP is bound at residue 8 to 15 (GLSGAGKT). 59–62 (DIRG) provides a ligand contact to GTP.

Belongs to the RapZ-like family.

In terms of biological role, displays ATPase and GTPase activities. This is Nucleotide-binding protein Cbei_4857 from Clostridium beijerinckii (strain ATCC 51743 / NCIMB 8052) (Clostridium acetobutylicum).